We begin with the raw amino-acid sequence, 621 residues long: pH-response transcription factor pacc-1 (621 aa).

Residues 1-14 (MSSTPAQENGTVNG) show a composition bias toward polar residues. Positions 1 to 87 (MSSTPAQENG…PTTASNSSAP (87 aa)) are disordered. A compositionally biased stretch (low complexity) spans 15–87 (ANAAPAPAPA…PTTASNSSAP (73 aa)). 3 C2H2-type zinc fingers span residues 95–120 (LVCRWAECNERFTSAEVLYEHICEKH), 131–155 (LTCQWNSCRTTTVKRDHITSHVRVH), and 161–183 (HKCDFCGKCFKRPQDLKKHVKTH). Disordered regions lie at residues 395-539 (PTYA…PETY) and 566-621 (DEDD…PRIN). Low complexity-rich tracts occupy residues 409-423 (ASLASPLSATSPHSA) and 436-465 (SYTSGHSPSTSSTSLSPTSRHSSTPSVSYP). A YPX[LI] motif 1 motif is present at residues 464–467 (YPTL). The span at 476-486 (PSTSGLGSNFT) shows a compositional bias: polar residues. Residues 502–511 (RAADEADRAP) show a composition bias toward basic and acidic residues. The span at 515 to 525 (ASEQATVSSPS) shows a compositional bias: polar residues. The span at 583 to 595 (RNQQQRNQQQQQQ) shows a compositional bias: low complexity. Residues 614-617 (YPVL) carry the YPX[LI] motif 2 motif.

It belongs to the pacC/RIM101 family. In terms of assembly, binds to DNA. Interacts with palA/prr-1, which binds to the two YPX[LI] motifs and is required for proteolytic processing. In terms of processing, activated by C-terminal proteolytic cleavage by signaling protease (probably palB/RIM13) at neutral to alkaline ambient pH.

The protein localises to the cytoplasm. It localises to the nucleus. Its function is as follows. Transcription factor that mediates regulation of both acid- and alkaline-expressed genes in response to ambient pH. At alkaline ambient pH, activates transcription of alkaline-expressed genes (including pacc-1 itself) and represses transcription of acid-expressed genes. The chain is pH-response transcription factor pacc-1 (pacc-1) from Neurospora crassa (strain ATCC 24698 / 74-OR23-1A / CBS 708.71 / DSM 1257 / FGSC 987).